Reading from the N-terminus, the 386-residue chain is Tetratricopeptide repeat protein 4 (386 aa).

Met1 bears the N-acetylmethionine mark. Ser51 is subject to Phosphoserine. TPR repeat units lie at residues 79-112, 117-150, and 151-184; these read AKTY…KCAD, AVLY…KPGH, and LKAI…DAKE. Ser244 carries the phosphoserine modification.

It belongs to the TTC4 family. Interacts (via TPR repeats) with HSP90AB1. Interacts with HSPA8, CDC6 and TBK1. Interacts with isoform 1 and isoform 3 of MSL1. As to expression, expressed at high levels in the heart, testis, kidney, brain and tongue. Expressed at low levels in the stomach, lung and liver.

It is found in the nucleus. Its subcellular location is the nucleoplasm. The protein resides in the cytoplasm. Its function is as follows. May act as a co-chaperone for HSP90AB1. This Mus musculus (Mouse) protein is Tetratricopeptide repeat protein 4 (Ttc4).